We begin with the raw amino-acid sequence, 285 residues long: Kanamycin B dioxygenase (285 aa).

Belongs to the PhyH family. It depends on Fe cation as a cofactor.

It catalyses the reaction kanamycin B + 2-oxoglutarate + O2 = 2'-dehydrokanamycin A + succinate + NH4(+) + CO2. The protein operates within antibiotic biosynthesis; kanamycin biosynthesis. In terms of biological role, mediates the conversion of kanamycin B into 2'-dehydrokanamycin A during the transformation of kanamycin B to kanamycin A. This chain is Kanamycin B dioxygenase (kanJ), found in Streptomyces kanamyceticus.